The chain runs to 281 residues: Energy-coupling factor transporter ATP-binding protein EcfA1 (281 aa).

The ABC transporter domain occupies 6 to 242 (IDVKHLDYRY…GEALIKMGLD (237 aa)). 42–49 (GHNGSGKS) lines the ATP pocket.

It belongs to the ABC transporter superfamily. Energy-coupling factor EcfA family. As to quaternary structure, forms a stable energy-coupling factor (ECF) transporter complex composed of 2 membrane-embedded substrate-binding proteins (S component), 2 ATP-binding proteins (A component) and 2 transmembrane proteins (T component).

Its subcellular location is the cell membrane. In terms of biological role, ATP-binding (A) component of a common energy-coupling factor (ECF) ABC-transporter complex. Unlike classic ABC transporters this ECF transporter provides the energy necessary to transport a number of different substrates. The polypeptide is Energy-coupling factor transporter ATP-binding protein EcfA1 (Lactiplantibacillus plantarum (strain ATCC BAA-793 / NCIMB 8826 / WCFS1) (Lactobacillus plantarum)).